We begin with the raw amino-acid sequence, 352 residues long: DNA integrity scanning protein DisA (352 aa).

The DAC domain occupies 3–143; it reads PQELIEKIKL…NYKYVVNQVD (141 aa). ATP-binding positions include Gly71, Leu89, and 102-106; that span reads TRHRT.

This sequence belongs to the DisA family. Homooctamer. It depends on Mg(2+) as a cofactor.

The catalysed reaction is 2 ATP = 3',3'-c-di-AMP + 2 diphosphate. Participates in a DNA-damage check-point. DisA forms globular foci that rapidly scan along the chromosomes searching for lesions. Functionally, also has diadenylate cyclase activity, catalyzing the condensation of 2 ATP molecules into cyclic di-AMP (c-di-AMP). c-di-AMP likely acts as a signaling molecule that may couple DNA integrity with a cellular process. The protein is DNA integrity scanning protein DisA of Thermotoga neapolitana (strain ATCC 49049 / DSM 4359 / NBRC 107923 / NS-E).